The following is a 517-amino-acid chain: Heat shock 70-related protein 5 (517 aa).

This sequence belongs to the heat shock protein 70 family.

Its function is as follows. May function in protein folding and assembly, and disassembly of protein complexes. This is Heat shock 70-related protein 5 from Dictyostelium discoideum (Social amoeba).